A 360-amino-acid chain; its full sequence is Peptide chain release factor 1 (360 aa).

At Gln-235 the chain carries N5-methylglutamine.

It belongs to the prokaryotic/mitochondrial release factor family. Methylated by PrmC. Methylation increases the termination efficiency of RF1.

The protein resides in the cytoplasm. In terms of biological role, peptide chain release factor 1 directs the termination of translation in response to the peptide chain termination codons UAG and UAA. The polypeptide is Peptide chain release factor 1 (Bordetella parapertussis (strain 12822 / ATCC BAA-587 / NCTC 13253)).